A 200-amino-acid chain; its full sequence is Phospholipase A2 inhibitor gamma subunit A (200 aa).

Residues 1–19 (MKSLHTICLLFIFIARGNS) form the signal peptide. 8 disulfide bridges follow: C22-C46, C25-C32, C39-C67, C73-C94, C95-C100, C118-C143, C136-C165, and C169-C191. N-linked (GlcNAc...) asparagine glycosylation occurs at N176.

The protein belongs to the CNF-like-inhibitor family. Occurs as a mixture of oligomers. Tetrameric arrangement appears to be the predominant quaternary structure. In terms of tissue distribution, expressed by the liver.

It is found in the secreted. Inhibits the enzymatic activity of phospholipase A2 (PA2). This is Phospholipase A2 inhibitor gamma subunit A from Gloydius brevicaudus siniticus (Chinese mamushi).